The primary structure comprises 553 residues: Chaperonin GroEL (553 aa).

ATP contacts are provided by residues 29–32, K50, 86–90, G424, and D504; these read TLGP and DGTTT.

The protein belongs to the chaperonin (HSP60) family. Forms a cylinder of 14 subunits composed of two heptameric rings stacked back-to-back. Interacts with the co-chaperonin GroES.

The protein localises to the cytoplasm. It catalyses the reaction ATP + H2O + a folded polypeptide = ADP + phosphate + an unfolded polypeptide.. In terms of biological role, together with its co-chaperonin GroES, plays an essential role in assisting protein folding. The GroEL-GroES system forms a nano-cage that allows encapsulation of the non-native substrate proteins and provides a physical environment optimized to promote and accelerate protein folding. The sequence is that of Chaperonin GroEL from Koribacter versatilis (strain Ellin345).